Here is a 674-residue protein sequence, read N- to C-terminus: DNA ligase (674 aa).

NAD(+) is bound by residues 34–38 (DFEFD), 83–84 (SL), and Glu117. The active-site N6-AMP-lysine intermediate is Lys119. Positions 140, 184, 297, and 321 each coordinate NAD(+). Residues Cys415, Cys418, Cys433, and Cys439 each coordinate Zn(2+). The 77-residue stretch at 598-674 (LVNTNFEGQS…IDEDEFERML (77 aa)) folds into the BRCT domain.

The protein belongs to the NAD-dependent DNA ligase family. LigA subfamily. The cofactor is Mg(2+). Requires Mn(2+) as cofactor.

It carries out the reaction NAD(+) + (deoxyribonucleotide)n-3'-hydroxyl + 5'-phospho-(deoxyribonucleotide)m = (deoxyribonucleotide)n+m + AMP + beta-nicotinamide D-nucleotide.. Functionally, DNA ligase that catalyzes the formation of phosphodiester linkages between 5'-phosphoryl and 3'-hydroxyl groups in double-stranded DNA using NAD as a coenzyme and as the energy source for the reaction. It is essential for DNA replication and repair of damaged DNA. The polypeptide is DNA ligase (Chlorobaculum parvum (strain DSM 263 / NCIMB 8327) (Chlorobium vibrioforme subsp. thiosulfatophilum)).